Consider the following 1479-residue polypeptide: MTKRAGLPLGRAFLVLILLSAADSLFFSSFPRSALQLFSSVLFTDAAEPDSDATPGLRPQPSPRTFRPTGYQRIEVKTVDEELPEDLKVYTASTRGSSSRTFEVRNAGGRQEGFTLSVLTAGGPLPHGSWSWSGTPPEVQTTGGSQISFGWVPDTETPSLPERNLLQLKRMLRDEGLIEAVQLRAAEKGCPVAVLHNLRQLPVNFREVLHEEYESRSNPAKMYEVANSYVQQRGSDAARWSVSQSVELSLLEMHATSTTDPRGSSAVPSFLETGPQVRVAMTDAVPSGIRVYATPPAPRPVPVQSNQTEKERSPTSKRLVGMQLGLYLICKLAALFGHPTLFLNPYYTEQQLLEAVAQALGIAPPHRGDFENEGNEAQATANQHNGSADQLLAAIEIFRLGPNPYTIGHVLTLMIAYLDYESFFGASPSKPFHSWVSLAASAGNNTGFAMLDEMCDNHRGPKRRGQKHWYQTGGARKHKNRDMLPLHRQLCDALELVLNGVQQIQIDLMDELGKYKTGVEPLVDPATNSARIHTRTCRGLSPVCDYEATILAPVRALEPHEQQDSLRTKKAFNLVTGYGSGHVGQITGSIAEPFSHSWRTRWGKVVADPTAYGEIFERTLWFDDRELMAKSSGALFRQYDRIAKDSMSFGVFMNVENGLLKKDMRSKLEAYISQRKSFVEKRQQSRFAKLRKKIPENDPYALRAAIFLALNSRTFCAQPTSFLSSFRTFLTNQYHKLSQGRNLPRSQRSLMAFMRTGQVKFFQEWCSFDPLAVNALFLFRFAVSGTDPAALHDRQHTRVSRNKKTMRILNSKWTPAVLKKLMRKVNHKHMAREAKALLLRSLDPTVLSSIVTAFDFITHTQANLEVNQNAFMYHEVRAREVSRQSAAEKGSHRLHERGLVRETDDMIKRWAEHGIPGDIKRRLARGEKLPEGMSFGGIPIPNLTNWDAQLNSKWLEAYNAYLRHPYGRAALNARDPVALLVKDSRDRLQAEAEGTIFLGRIAKRVHQSKNLLRRAGRALKTFFLSLLRENERSEYAVWFGVKVDMRQVIQTCRQINSVAEVVKNDRLYDFITDGWMELVKDVVAGYTKASVRVPGFDTISAANEQLRKEGVAAATARNQGFLSIHYDYANLPEEERKKEFQRSMCMEQCEALWKLVMAFVMPNLQNPKKLKGYEKDFSGAKEIEKLNSPHHVNAFRFSLSVQIDFFDNMLDKTSKKNLKAMKFGASTWFTYAMKLAGQVNSEMGNPNLGTALYMQAAYYGNYIRKWMEQRRKSRKQAIIGVLTLGMMGLYALLNVADIVQHMEDIGGAPPVSCVTNEILGVTCAPQAIAKATTSAARVATQDFLKVGLFAGMAPYLMLPMAVVSVWNILKSEIKVLLQFEMALKHTFTRLKRWLAAPFKNWWAKRGRLKDALFRRASQTYRKTEQETKQPPRPRNLHNPSSWGDTELDSLGVPPEPFVQDFEIKYTTPVFPMSAPLIKA.

The signal sequence occupies residues 1–24; that stretch reads MTKRAGLPLGRAFLVLILLSAADS. Residues 25–1277 lie on the Cytoplasmic side of the membrane; it reads LFFSSFPRSA…EQRRKSRKQA (1253 aa). 2 disordered regions span residues 49-68 and 291-316; these read PDSDATPGLRPQPSPRTFRP and VYATPPAPRPVPVQSNQTEKERSPTS. Residues 1278-1298 form a helical membrane-spanning segment; sequence IIGVLTLGMMGLYALLNVADI. The segment at 1297-1333 is interaction with AMA1; it reads DIVQHMEDIGGAPPVSCVTNEILGVTCAPQAIAKATT. Residues 1299-1479 are Extracellular-facing; it reads VQHMEDIGGA…FPMSAPLIKA (181 aa). C1313 and C1323 are joined by a disulfide. Residues 1419-1445 are disordered; it reads TYRKTEQETKQPPRPRNLHNPSSWGDT.

It belongs to the apicomplexan parasites RON2 family. Component of the moving junction (MJ) complex, composed of AMA1, a transmembrane protein on the parasite surface, and a complex of the rhoptry neck proteins RON2, RON4, RON5 and RON8 localized to the cytoplasmic face of the host plasma membrane. Interacts (via C-terminus) with AMA1 (via ectodomain); RON2 serves as the receptor for AMA1 on the host plasma membrane. AMA1 and the RON proteins are initially in distinct compartments within the parasite, namely the micronemes and the rhoptries, and interaction happens only upon initiation of invasion when the micronemes and rhoptries discharge.

It localises to the secreted. Its subcellular location is the cytoplasm. The protein resides in the host cell membrane. Essential rhoptry neck protein that plays an important role in host cell invasion. Upon host invasion by tachyzoites, the protein is injected into the host cell where it functions as a receptor for apical membrane antigen 1 (AMA1) on the parasite. Part of the moving junction (MJ) complex, a ringlike structure formed between the plasma membranes of the apical tip of the parasite and the target host cell. During invasion, the MJ migrates from the anterior to the posterior of the parasite, leading to internalization of the parasite into a parasitophorous vacuole (PV). The sequence is that of Rhoptry neck protein 2 (RON2) from Toxoplasma gondii (strain ATCC 50611 / Me49).